The sequence spans 474 residues: Glutathione synthetase (474 aa).

N-acetylalanine is present on Ala-2. Arg-125 lines the substrate pocket. Glu-144 serves as a coordination point for ATP. Glu-144 and Asn-146 together coordinate Mg(2+). Residues 148 to 151 (ISAS), 214 to 216 (ERN), Gln-220, and 267 to 270 (RDGY) each bind substrate. ATP contacts are provided by residues Lys-305, 364–373 (KPQREGGGNN), Tyr-375, and 398–401 (MEKI). A Mg(2+)-binding site is contributed by Glu-368. Ser-415 carries the phosphoserine modification. Residue Glu-425 coordinates ATP. Arg-450 contacts substrate. ATP-binding residues include Lys-452 and Asp-458. Substrate is bound at residue 461–462 (VA).

Belongs to the eukaryotic GSH synthase family. In terms of assembly, homodimer. It depends on Mg(2+) as a cofactor.

It catalyses the reaction gamma-L-glutamyl-L-cysteine + glycine + ATP = glutathione + ADP + phosphate + H(+). The enzyme catalyses gamma-L-glutamyl-(2S)-2-aminobutanoate + glycine + ATP = ophthalmate + ADP + phosphate + H(+). The protein operates within sulfur metabolism; glutathione biosynthesis; glutathione from L-cysteine and L-glutamate: step 2/2. Functionally, catalyzes the production of glutathione from gamma-glutamylcysteine and glycine in an ATP-dependent manner. Glutathione (gamma-glutamylcysteinylglycine, GSH) is the most abundant intracellular thiol in living aerobic cells and is required for numerous processes including the protection of cells against oxidative damage, amino acid transport, the detoxification of foreign compounds, the maintenance of protein sulfhydryl groups in a reduced state and acts as a cofactor for a number of enzymes. Participates in ophthalmate biosynthesis in hepatocytes. The sequence is that of Glutathione synthetase from Homo sapiens (Human).